Consider the following 636-residue polypeptide: Protein SOSEKI 2 (636 aa).

Positions 9-103 are DIX-like oligomerization domain; sequence HKIEVIYLLS…YVLKALEVMD (95 aa). Disordered stretches follow at residues 164 to 188, 281 to 304, 340 to 393, and 499 to 524; these read VHNN…SRVP, HGRL…TVDI, VEGS…TSAK, and LGSG…VSRP. Polar residues-rich tracts occupy residues 375 to 390 and 499 to 510; these read SSKS…TYET and LGSGQASESFSP.

It belongs to the SOSEKI family. Homodimer. Forms long polymer filaments with other SOKs proteins polymers crucial for polar localization and biological activity.

It localises to the cell membrane. In terms of biological role, SOSEKI proteins locally interpret global polarity cues and can influence cell division orientation to coordinate cell polarization relative to body axes. In Physcomitrium patens (Spreading-leaved earth moss), this protein is Protein SOSEKI 2.